We begin with the raw amino-acid sequence, 414 residues long: Gamma-glutamyl phosphate reductase (414 aa).

It belongs to the gamma-glutamyl phosphate reductase family.

It is found in the cytoplasm. It carries out the reaction L-glutamate 5-semialdehyde + phosphate + NADP(+) = L-glutamyl 5-phosphate + NADPH + H(+). It functions in the pathway amino-acid biosynthesis; L-proline biosynthesis; L-glutamate 5-semialdehyde from L-glutamate: step 2/2. Catalyzes the NADPH-dependent reduction of L-glutamate 5-phosphate into L-glutamate 5-semialdehyde and phosphate. The product spontaneously undergoes cyclization to form 1-pyrroline-5-carboxylate. The polypeptide is Gamma-glutamyl phosphate reductase (Thermoanaerobacter pseudethanolicus (strain ATCC 33223 / 39E) (Clostridium thermohydrosulfuricum)).